We begin with the raw amino-acid sequence, 515 residues long: Putative ribose/galactose/methyl galactoside import ATP-binding protein (515 aa).

ABC transporter domains follow at residues 25–261 (LEVL…VGRE) and 268–515 (LREK…SGLN). 57–64 (GENGAGKS) serves as a coordination point for ATP.

It belongs to the ABC transporter superfamily. Carbohydrate importer 2 (CUT2) (TC 3.A.1.2) family.

It is found in the cell inner membrane. The catalysed reaction is D-ribose(out) + ATP + H2O = D-ribose(in) + ADP + phosphate + H(+). It catalyses the reaction D-galactose(out) + ATP + H2O = D-galactose(in) + ADP + phosphate + H(+). In terms of biological role, part of an ABC transporter complex involved in carbohydrate import. Could be involved in ribose, galactose and/or methyl galactoside import. Responsible for energy coupling to the transport system. The protein is Putative ribose/galactose/methyl galactoside import ATP-binding protein of Pseudomonas fluorescens (strain ATCC BAA-477 / NRRL B-23932 / Pf-5).